The chain runs to 132 residues: Large ribosomal subunit protein bL17 (132 aa).

Belongs to the bacterial ribosomal protein bL17 family. In terms of assembly, part of the 50S ribosomal subunit. Contacts protein L32.

This is Large ribosomal subunit protein bL17 from Shewanella woodyi (strain ATCC 51908 / MS32).